Reading from the N-terminus, the 1121-residue chain is Cilia- and flagella-associated protein 70 (1121 aa).

The segment covering 410-428 (NLKEDKPVKEKDIDGRPRP) has biased composition (basic and acidic residues). Residues 410 to 457 (NLKEDKPVKEKDIDGRPRPGDVQAPSIKSQSSDTPLEGEPPLSHNPEG) are disordered. 3 TPR repeats span residues 635–668 (SEQLQLFAFEAEVNENFEMAAAYYKERLVREPQN), 669–702 (LDHWLDYGAFCLLTEDNIKAQECFQKALSLNQSH), and 704–736 (HSLLLCGVLAVLLENYEQAEIFFEDATCLEPTN). Disordered stretches follow at residues 778-802 (KQKSTGVEDTEERGKRESSLGPWGI) and 836-858 (QSDSQEPILTTQTWDPSISQKPS). 5 TPR repeats span residues 929 to 962 (CEYYLVLAQTHILKKNFAKAEEYLQQAAQMDYLN), 963 to 996 (PNVWGLKGHLYFLSGNHSEAKACYERTISFVVDA), 1000 to 1033 (HFIFLRLGLIYLEEKEYEKAKKTYMQACKRSPSC), 1035 to 1066 (TWLGLGIACYRLEELTEAEDALSEANALNNYN), and 1068 to 1100 (EVWAYLALVCLKVGRQLEAEQAYKYMIKLKLKD).

The protein belongs to the CFAP70 family. In terms of tissue distribution, expressed in testis.

The protein resides in the cell projection. Its subcellular location is the cilium. It is found in the flagellum. The protein localises to the cytoplasm. It localises to the cytoskeleton. The protein resides in the flagellum basal body. Its subcellular location is the cilium axoneme. In terms of biological role, axoneme-binding protein that plays a role in the regulation of ciliary motility and cilium length. The protein is Cilia- and flagella-associated protein 70 of Homo sapiens (Human).